A 643-amino-acid polypeptide reads, in one-letter code: 1-deoxy-D-xylulose-5-phosphate synthase (643 aa).

Thiamine diphosphate contacts are provided by residues His-72 and 113–115; that span reads GHA. Asp-144 lines the Mg(2+) pocket. Thiamine diphosphate is bound by residues 145 to 146, Asn-174, Tyr-287, and Glu-370; that span reads GA. Position 174 (Asn-174) interacts with Mg(2+).

This sequence belongs to the transketolase family. DXPS subfamily. Homodimer. It depends on Mg(2+) as a cofactor. Thiamine diphosphate is required as a cofactor.

It catalyses the reaction D-glyceraldehyde 3-phosphate + pyruvate + H(+) = 1-deoxy-D-xylulose 5-phosphate + CO2. Its pathway is metabolic intermediate biosynthesis; 1-deoxy-D-xylulose 5-phosphate biosynthesis; 1-deoxy-D-xylulose 5-phosphate from D-glyceraldehyde 3-phosphate and pyruvate: step 1/1. Catalyzes the acyloin condensation reaction between C atoms 2 and 3 of pyruvate and glyceraldehyde 3-phosphate to yield 1-deoxy-D-xylulose-5-phosphate (DXP). The polypeptide is 1-deoxy-D-xylulose-5-phosphate synthase (Synechococcus sp. (strain CC9605)).